The chain runs to 222 residues: Octanoyltransferase (222 aa).

The 176-residue stretch at 32–207 (RDRPDVLMLL…AFARVFGVQC (176 aa)) folds into the BPL/LPL catalytic domain. Substrate-binding positions include 72-79 (RGGEVTYH), 139-141 (ALG), and 152-154 (GFA). Residue Cys-170 is the Acyl-thioester intermediate of the active site.

The protein belongs to the LipB family.

It localises to the cytoplasm. The enzyme catalyses octanoyl-[ACP] + L-lysyl-[protein] = N(6)-octanoyl-L-lysyl-[protein] + holo-[ACP] + H(+). Its pathway is protein modification; protein lipoylation via endogenous pathway; protein N(6)-(lipoyl)lysine from octanoyl-[acyl-carrier-protein]: step 1/2. Its function is as follows. Catalyzes the transfer of endogenously produced octanoic acid from octanoyl-acyl-carrier-protein onto the lipoyl domains of lipoate-dependent enzymes. Lipoyl-ACP can also act as a substrate although octanoyl-ACP is likely to be the physiological substrate. This Gloeobacter violaceus (strain ATCC 29082 / PCC 7421) protein is Octanoyltransferase.